Here is a 337-residue protein sequence, read N- to C-terminus: Protein-glutamate methylesterase/protein-glutamine glutaminase of group 3 operon (337 aa).

In terms of domain architecture, Response regulatory spans 2–119; the sequence is KIAIVNDMPL…GDAREAAAPL (118 aa). The residue at position 53 (D53) is a 4-aspartylphosphate. Positions 144–337 constitute a CheB-type methylesterase domain; sequence PLREASQRRG…AGRLTEFFAK (194 aa). Active-site residues include S160, H187, and D280.

It belongs to the CheB family. Post-translationally, phosphorylated by CheA. Phosphorylation of the N-terminal regulatory domain activates the methylesterase activity.

The protein resides in the cytoplasm. The enzyme catalyses [protein]-L-glutamate 5-O-methyl ester + H2O = L-glutamyl-[protein] + methanol + H(+). The catalysed reaction is L-glutaminyl-[protein] + H2O = L-glutamyl-[protein] + NH4(+). Involved in chemotaxis. Part of a chemotaxis signal transduction system that modulates chemotaxis in response to various stimuli. Catalyzes the demethylation of specific methylglutamate residues introduced into the chemoreceptors (methyl-accepting chemotaxis proteins or MCP) by CheR. Also mediates the irreversible deamidation of specific glutamine residues to glutamic acid. The polypeptide is Protein-glutamate methylesterase/protein-glutamine glutaminase of group 3 operon (Pseudomonas putida (strain ATCC 47054 / DSM 6125 / CFBP 8728 / NCIMB 11950 / KT2440)).